A 494-amino-acid polypeptide reads, in one-letter code: Tripartite motif-containing protein 5 (494 aa).

The residue at position 2 (A2) is an N-acetylalanine. The RING-type zinc finger occupies 15–59; sequence CPICLELLTQPLSLDCGHSFCQACLTANHKTSMPDEGERSCPVCR. At S86 the chain carries Phosphoserine. The B box-type zinc finger occupies 91 to 133; the sequence is QKVDHCARHGEKLLLFCREDRKVICWLCERSQEHRGHHTFLTE. The Zn(2+) site is built by C96, H99, C118, and H124. Residues 132-241 adopt a coiled-coil conformation; sequence TEEVAQEYQM…LISDLEHRLQ (110 aa). The tract at residues 186–199 is required for interaction with GABARAP and for autophagy; that stretch reads FEQLRHILDWVESN. The region spanning 282-494 is the B30.2/SPRY domain; that stretch reads LKVMLEVLRE…VPMTLCSPSS (213 aa).

It belongs to the TRIM/RBCC family. In terms of assembly, can form homodimers and homotrimers. In addition to lower-order dimerization, also exhibits a higher-order multimerization and both low- and high-order multimerizations are essential for its restriction activity. Interacts with BTBD1 and BTBD2. Interacts with PSMC4, PSMC5, PSMD7 and HSPA8/HSC70. Interacts (via B30.2/SPRY domain) with HSPA1A/B. Interacts with PSMC2, MAP3K7/TAK1, TAB2 and TAB3. Interacts with SQSTM1. Interacts with TRIM6 and TRIM34. Interacts with ULK1 (phosphorylated form), GABARAP, GABARAPL1, GABARAPL2, MAP1LC3A, MAP1LC3C and BECN1. In terms of processing, degraded in a proteasome-independent fashion in the absence of viral infection but in a proteasome-dependent fashion following exposure to restriction sensitive virus. Post-translationally, autoubiquitinated in a RING finger- and UBE2D2-dependent manner. Monoubiquitinated by TRIM21. Deubiquitinated by Yersinia YopJ. Ubiquitination may not lead to proteasomal degradation.

It is found in the cytoplasm. It localises to the nucleus. It catalyses the reaction S-ubiquitinyl-[E2 ubiquitin-conjugating enzyme]-L-cysteine + [acceptor protein]-L-lysine = [E2 ubiquitin-conjugating enzyme]-L-cysteine + N(6)-ubiquitinyl-[acceptor protein]-L-lysine.. Its pathway is protein modification; protein ubiquitination. Its function is as follows. Capsid-specific restriction factor that prevents infection from non-host-adapted retroviruses. Blocks viral replication early in the life cycle, after viral entry but before reverse transcription. In addition to acting as a capsid-specific restriction factor, also acts as a pattern recognition receptor that activates innate immune signaling in response to the retroviral capsid lattice. Binding to the viral capsid triggers its E3 ubiquitin ligase activity, and in concert with the heterodimeric ubiquitin conjugating enzyme complex UBE2V1-UBE2N (also known as UBC13-UEV1A complex) generates 'Lys-63'-linked polyubiquitin chains, which in turn are catalysts in the autophosphorylation of the MAP3K7/TAK1 complex (includes TAK1, TAB2, and TAB3). Activation of the MAP3K7/TAK1 complex by autophosphorylation results in the induction and expression of NF-kappa-B and MAPK-responsive inflammatory genes, thereby leading to an innate immune response in the infected cell. Plays a role in regulating autophagy through activation of autophagy regulator BECN1 by causing its dissociation from its inhibitors BCL2 and TAB2. This is Tripartite motif-containing protein 5 (TRIM5) from Hoolock hoolock (Western hoolock gibbon).